Reading from the N-terminus, the 572-residue chain is Putative acyl-CoA synthetase CCNA_01223 (572 aa).

Belongs to the ATP-dependent AMP-binding enzyme family.

It functions in the pathway lipid metabolism; sphingolipid metabolism. Its function is as follows. Involved in de novo bacterial ceramide synthesis. This is Putative acyl-CoA synthetase CCNA_01223 from Caulobacter vibrioides (strain NA1000 / CB15N) (Caulobacter crescentus).